We begin with the raw amino-acid sequence, 264 residues long: Tryptophan synthase alpha chain (264 aa).

Catalysis depends on proton acceptor residues Glu-49 and Asp-60.

This sequence belongs to the TrpA family. As to quaternary structure, tetramer of two alpha and two beta chains.

It catalyses the reaction (1S,2R)-1-C-(indol-3-yl)glycerol 3-phosphate + L-serine = D-glyceraldehyde 3-phosphate + L-tryptophan + H2O. It participates in amino-acid biosynthesis; L-tryptophan biosynthesis; L-tryptophan from chorismate: step 5/5. In terms of biological role, the alpha subunit is responsible for the aldol cleavage of indoleglycerol phosphate to indole and glyceraldehyde 3-phosphate. In Picosynechococcus sp. (strain ATCC 27264 / PCC 7002 / PR-6) (Agmenellum quadruplicatum), this protein is Tryptophan synthase alpha chain.